The chain runs to 4473 residues: Plectin (4473 aa).

Calponin-homology (CH) domains follow at residues 1 to 74 and 87 to 192; these read DGHN…LHFQ and MTAK…DAMP. The interval 1–192 is actin-binding; it reads DGHNLISLLE…YVSSLYDAMP (192 aa). A globular 1 region spans residues 1 to 1259; it reads DGHNLISLLE…SELTTLTSQY (1259 aa). One copy of the Spectrin 1 repeat lies at 449–508; the sequence is RYLQDLLAWVEENQRRIDSAEWGVDLPSVEAQLGSHRGMHQSIEEFRAKIERARNDESQL. Position 509 is a phosphoserine (S509). Spectrin repeat units lie at residues 529 to 613 and 626 to 719; these read KLLN…REDH and LQTQ…AIVQ. At T604 the chain carries Phosphothreonine. Positions 730 to 787 constitute an SH3 domain; the sequence is RGHVPLMAVCDYKQVEVTVHKGDQCQLVGPAQPSHWKVLRGPSSEAAVPSVCFLVPPP. A Phosphoserine modification is found at S836. One copy of the Spectrin 4 repeat lies at 1104–1204; sequence RERVNQLLER…QKFAKQYINA (101 aa). S1224 is subject to Phosphoserine. Residues 1258–2548 adopt a coiled-coil conformation; that stretch reads QYIKFISETL…EEIAATQAAA (1291 aa). Residues 1260–2544 are central fibrous rod domain; it reads IKFISETLRR…LAHSEEIAAT (1285 aa). 2 disordered regions span residues 1274 to 1293 and 1407 to 1434; these read ERLA…EGEA and RAEE…DESQ. A Phosphoserine modification is found at S1510. The residue at position 1514 (K1514) is an N6-acetyllysine. 5 disordered regions span residues 1529–1550, 1582–1616, 1881–1929, 1950–1971, and 2003–2098; these read VTQL…ERAR, SLAQ…RELA, AEDT…AARQ, LRER…AAQK, and ERLR…KHKK. 3 stretches are compositionally biased toward basic and acidic residues: residues 1587 to 1616, 1881 to 1897, and 1905 to 1917; these read DAEK…RELA, AEDT…EAAR, and EEQR…ERVQ. A compositionally biased stretch (low complexity) spans 1959-1968; it reads ARQLQLAQEA. Basic and acidic residues predominate over residues 2003–2047; sequence ERLRGEAEAARRAAEEAEEAREQAEREAAQSRKQVEEAERLKQSA. Positions 2048–2061 are enriched in low complexity; sequence EEQAQARAQAQAAA. Over residues 2062–2077 the composition is skewed to basic and acidic residues; it reads EKLRKEAEQEAARRAQ. A Phosphoserine modification is found at S2420. K2425 is modified (N6-acetyllysine). Positions 2457 to 2476 are disordered; that stretch reads REEQQRQQRQMEQEKQELVA. Positions 2545–4473 are globular 2; the sequence is QAAAAKALPN…SLGGPESAVA (1929 aa). Residues S2563 and S2591 each carry the phosphoserine modification. Plectin repeat units lie at residues 2615 to 2652, 2653 to 2690, 2691 to 2728, 2729 to 2766, and 2770 to 2804; these read RQYL…PGTA, LILL…PELH, HKLL…RDHA, IRLL…EEMS, and ADPG…PETG. Phosphothreonine is present on T2675. Residue Y2822 is modified to Phosphotyrosine. K2842 and K2880 each carry N6-acetyllysine. Plectin repeat units lie at residues 2905–2942, 2943–2980, 2981–3018, 3019–3056, and 3057–3094; these read ALVP…ADSV, RRAL…PDVA, VALL…PELH, EKLL…REQG, and LRLL…KETN. Y3151 is modified (phosphotyrosine). K3209 carries the post-translational modification N6-acetyllysine. Plectin repeat units follow at residues 3274-3311, 3312-3349, 3350-3387, 3388-3425, and 3429-3463; these read RTLL…PSTA, TLLL…PELH, EKLL…REHA, IRLL…EEMS, and ADPS…PETG. At T3574 the chain carries Phosphothreonine. Y3579 is subject to Phosphotyrosine. Plectin repeat units lie at residues 3609–3646, 3647–3684, 3685–3722, 3723–3760, 3764–3797, and 3800–3834; these read WRYL…AEVA, RLLL…PELH, DRLL…AEEA, LRLL…KDTH, SEPS…DGSG, and LLPL…EATA. T3819 carries the phosphothreonine modification. At S3843 the chain carries Phosphoserine. Plectin repeat units lie at residues 3852-3889, 3890-3927, 3928-3965, 3966-4003, 4007-4041, and 4043-4094; these read QKFL…PGTA, FELL…PEFK, DRLL…KDHG, IRLL…EEMN, TDPS…PQTG, and RLLP…HQTY. The interval 4039–4089 is binding to intermediate filaments; that stretch reads QTGLRLLPLKEKKRERKTSSKSSVRKRRVVIVDPETSKEMSVYEAYRKGLI. S4171, S4173, S4174, S4175, S4178, S4179, S4180, and S4181 each carry phosphoserine. Y4182 is subject to Phosphotyrosine. S4185, S4189, and S4195 each carry phosphoserine. Plectin repeat units follow at residues 4197 to 4234, 4235 to 4272, 4273 to 4310, 4311 to 4348, and 4349 to 4386; these read SDPT…NITG, QRLL…KIMV, DRIN…YEAG, QRFL…ARTA, and QKLR…EGTG. At T4200 the chain carries Phosphothreonine. T4328 carries the phosphothreonine; by CDK1 modification. 2 positions are modified to phosphoserine: S4396 and S4402. Residues 4400 to 4460 are compositionally biased toward low complexity; sequence YYSPYSVSGS…SGYGRRYASG (61 aa). A disordered region spans residues 4400–4473; it reads YYSPYSVSGS…SLGGPESAVA (74 aa). At Y4404 the chain carries Phosphotyrosine. Phosphoserine occurs at positions 4405, 4407, and 4411. Residue T4412 is modified to Phosphothreonine. The interval 4414-4429 is 4 X 4 AA tandem repeats of G-S-R-X; sequence GSRTGSRTGSRAGSRR. A Phosphoserine modification is found at S4415. 2 positions are modified to omega-N-methylarginine: R4416 and R4429. 2 positions are modified to phosphoserine: S4431 and S4464.

It belongs to the plakin or cytolinker family. Homodimer or homotetramer. Interacts (via actin-binding domain) with SYNE3. Interacts (via calponin-homology (CH) 1 domain) with VIM (via rod region). Interacts (via N-terminus) with DST isoform 2 (via N-terminus). Interacts with FER. Interacts with TOR1A. Interacts with ANK3. Identified in complexes that contain VIM, EZR, AHNAK, BFSP1, BFSP2, ANK2, PLEC, PRX and spectrin. Phosphorylated by CDK1; regulates dissociation from intermediate filaments during mitosis.

The protein localises to the cytoplasm. It is found in the cytoskeleton. Its subcellular location is the cell junction. It localises to the hemidesmosome. The protein resides in the cell projection. The protein localises to the podosome. Functionally, interlinks intermediate filaments with microtubules and microfilaments and anchors intermediate filaments to desmosomes or hemidesmosomes. May be involved not only in the cross-linking and stabilization of cytoskeletal intermediate filaments network, but also in the regulation of their dynamics. The polypeptide is Plectin (PLEC) (Cricetulus griseus (Chinese hamster)).